Here is a 430-residue protein sequence, read N- to C-terminus: Histidine--tRNA ligase (430 aa).

Belongs to the class-II aminoacyl-tRNA synthetase family. In terms of assembly, homodimer.

The protein resides in the cytoplasm. It carries out the reaction tRNA(His) + L-histidine + ATP = L-histidyl-tRNA(His) + AMP + diphosphate + H(+). This Gloeothece citriformis (strain PCC 7424) (Cyanothece sp. (strain PCC 7424)) protein is Histidine--tRNA ligase.